A 1109-amino-acid polypeptide reads, in one-letter code: Receptor-like protein kinase (1109 aa).

An N-terminal signal peptide occupies residues 1-20 (MKVAVNTFLLFLCSTSSIYA). Residues 21-764 (AFALNSDGAA…GGLSTLGIAM (744 aa)) are Extracellular-facing. N-linked (GlcNAc...) asparagine glycosylation is found at Asn50, Asn74, and Asn114. LRR repeat units follow at residues 69 to 92 (FVDTLNLSSYGISGEFGPEISHLK), 93 to 115 (HLKKVVLSGNGFFGSIPSQLGNC), 117 to 140 (LLEHIDLSSNSFTGNIPDTLGALQ), 141 to 162 (NLRNLSLFFNSLIGPFPESLLS), 165 to 187 (HLETVYFTGNGLNGSIPSNIGNM), and 189 to 209 (ELTTLWLDDNQFSGPVPSSLG). 3 N-linked (GlcNAc...) asparagine glycosylation sites follow: Asn144, Asn177, and Asn186. Asn210 carries N-linked (GlcNAc...) asparagine glycosylation. LRR repeat units follow at residues 213–236 (TLQELYLNDNNLVGTLPVTLNNLE), 237–258 (NLVYLDVRNNSLVGAIPLDFVS), 261–284 (QIDTISLSNNQFTGGLPPGLGNCT), 309–331 (KLDTLYLAGNHFSGRIPPELGKC), 333–355 (SMIDLQLQQNQLEGEIPGELGML), 357–378 (QLQYLHLYTNNLSGEVPLSIWK), 381–404 (SLQSLQLYQNNLSGELPVDMTELK), 405–427 (QLVSLALYENHFTGVIPQDLGAN), 429–451 (SLEVLDLTRNMFTGHIPPNLCSQ), 453–476 (KLKRLLLGYNYLEGSVPSDLGGCS), 477–499 (TLERLILEENNLRGGLPDFVEKQ), 500–523 (NLLFFDLSGNNFTGPIPPSLGNLK), 524–546 (NVTAIYLSSNQLSGSIPPELGSL), 548–569 (KLEHLNLSHNILKGILPSELSN), 572–595 (KLSELDASHNLLNGSIPSTLGSLT), 596–618 (ELTKLSLGENSFSGGIPTSLFQS), 620–642 (KLLNLQLGGNLLAGDIPPVGALQ), 643–666 (ALRSLNLSSNKLNGQLPIDLGKLK), 667–689 (MLEELDVSHNNLSGTLRVLSTIQ), and 690–710 (SLTFINISHNLFSGPVPPSLT). N-linked (GlcNAc...) asparagine glycans are attached at residues Asn245 and Asn282. N-linked (GlcNAc...) asparagine glycans are attached at residues Asn367, Asn391, and Asn427. N-linked (GlcNAc...) asparagine glycosylation is found at Asn510, Asn524, Asn553, and Asn584. Asn648, Asn677, and Asn695 each carry an N-linked (GlcNAc...) asparagine glycan. Residues 765–785 (IVLGALLFIICLFLFSAFLFL) form a helical membrane-spanning segment. At 786-1109 (HCKKSVQEIA…YSSSVRNKSK (324 aa)) the chain is on the cytoplasmic side. The region spanning 816–1096 (LNDKYVIGKG…DVVKQLTRWS (281 aa)) is the Protein kinase domain. Residues 822–830 (IGKGAHGTI) and Lys845 contribute to the ATP site. The LRR 27 repeat unit spans residues 827–850 (HGTIYKATLSPDKVYAVKKLVFTG). Residue Asp942 is the Proton acceptor of the active site. The stretch at 958-981 (ISDFGIAKLLDQSATSIPSNTVQG) is one LRR 28 repeat.

It belongs to the protein kinase superfamily. Ser/Thr protein kinase family. INRPK1 and INRPK1b are expressed in leaves, cotyledons, shoot tips and roots from induced and vegetative plants. The highest concentrations of INRPK1 are found in vegetative roots, and the lowest concentrations in vegetative cotyledons. INRPK1b is more abundant in roots than other tissues. INRPK1a is expressed in vegetative roots. INRPK1c is expressed in cotyledons.

The protein localises to the cell membrane. Its subcellular location is the secreted. It catalyses the reaction L-seryl-[protein] + ATP = O-phospho-L-seryl-[protein] + ADP + H(+). The enzyme catalyses L-threonyl-[protein] + ATP = O-phospho-L-threonyl-[protein] + ADP + H(+). Functionally, possible role in short-day photoperiod floral induction. The protein is Receptor-like protein kinase (INRPK1) of Ipomoea nil (Japanese morning glory).